A 269-amino-acid chain; its full sequence is Zinc transporter ZupT (269 aa).

Helical transmembrane passes span 12 to 32 (AFSI…LVMF), 41 to 61 (LSFG…TEIF), 75 to 95 (DHAF…IALI), 126 to 146 (MMAA…TFFA), 152 to 172 (AVGM…GISI), 187 to 207 (VWAC…GYLV), 211 to 231 (FLSP…MVFL), and 249 to 269 (TVYG…LFHF). 2 residues coordinate Fe(2+): Asn-136 and Glu-139. Zn(2+) contacts are provided by Glu-139 and His-164. Fe(2+)-binding residues include Asn-165, Glu-168, and Glu-197. Glu-168 serves as a coordination point for Zn(2+).

This sequence belongs to the ZIP transporter (TC 2.A.5) family. ZupT subfamily.

It localises to the cell inner membrane. It catalyses the reaction Zn(2+)(in) = Zn(2+)(out). Mediates zinc uptake. May also transport other divalent cations. The protein is Zinc transporter ZupT of Neisseria meningitidis serogroup A / serotype 4A (strain DSM 15465 / Z2491).